The sequence spans 746 residues: NAD(P)H-quinone oxidoreductase subunit 5, chloroplastic (746 aa).

16 consecutive transmembrane segments (helical) span residues 9 to 29, 39 to 59, 89 to 109, 125 to 145, 147 to 167, 185 to 205, 222 to 242, 261 to 281, 283 to 303, 330 to 350, 357 to 377, 399 to 419, 428 to 448, 545 to 565, 608 to 628, and 726 to 746; these read WIIPFLTLAVPILIGLGLLLV, IWAFPSVLLLSIVMVFSTNLS, IDSLTSIMSILIATVGMMVLI, FAYMSFFNTSMLGLVISPNLI, IYIFWELVGMCSYLSIGFWFT, GDFGLLLGILGLYWIAGSFEF, NVLNSSFAILCASLLFLGAVA, TPISALIHAATMVAAGIFLVA, LLPLLTVIPYIMNLISLIGVI, LGYIMLASGIGSYRAALFHSI, ALLFLGSGSIIHSMEPILGYS, ATFLLGTLSLCGIPPLACFWS, WLYSPIFAIIASSTTGLTAFY, TMLFPLLLLAILTLFVGSVGI, IYSVSIAFFGILIANLLYGSV, and LFFSLSSLSIALILVYFYLYF.

It belongs to the complex I subunit 5 family. NDH is composed of at least 16 different subunits, 5 of which are encoded in the nucleus.

It localises to the plastid. It is found in the chloroplast thylakoid membrane. The enzyme catalyses a plastoquinone + NADH + (n+1) H(+)(in) = a plastoquinol + NAD(+) + n H(+)(out). It carries out the reaction a plastoquinone + NADPH + (n+1) H(+)(in) = a plastoquinol + NADP(+) + n H(+)(out). Its function is as follows. NDH shuttles electrons from NAD(P)H:plastoquinone, via FMN and iron-sulfur (Fe-S) centers, to quinones in the photosynthetic chain and possibly in a chloroplast respiratory chain. The immediate electron acceptor for the enzyme in this species is believed to be plastoquinone. Couples the redox reaction to proton translocation, and thus conserves the redox energy in a proton gradient. This is NAD(P)H-quinone oxidoreductase subunit 5, chloroplastic (ndhF) from Amborella trichopoda.